A 104-amino-acid polypeptide reads, in one-letter code: Large ribosomal subunit protein uL23 (104 aa).

It belongs to the universal ribosomal protein uL23 family. In terms of assembly, part of the 50S ribosomal subunit. Contacts protein L29, and trigger factor when it is bound to the ribosome.

One of the early assembly proteins it binds 23S rRNA. One of the proteins that surrounds the polypeptide exit tunnel on the outside of the ribosome. Forms the main docking site for trigger factor binding to the ribosome. The sequence is that of Large ribosomal subunit protein uL23 from Leptospira interrogans serogroup Icterohaemorrhagiae serovar copenhageni (strain Fiocruz L1-130).